The following is a 126-amino-acid chain: Large ribosomal subunit protein uL22 (126 aa).

It belongs to the universal ribosomal protein uL22 family. In terms of assembly, part of the 50S ribosomal subunit.

In terms of biological role, this protein binds specifically to 23S rRNA; its binding is stimulated by other ribosomal proteins, e.g. L4, L17, and L20. It is important during the early stages of 50S assembly. It makes multiple contacts with different domains of the 23S rRNA in the assembled 50S subunit and ribosome. The globular domain of the protein is located near the polypeptide exit tunnel on the outside of the subunit, while an extended beta-hairpin is found that lines the wall of the exit tunnel in the center of the 70S ribosome. The chain is Large ribosomal subunit protein uL22 from Dinoroseobacter shibae (strain DSM 16493 / NCIMB 14021 / DFL 12).